The following is a 388-amino-acid chain: Alanine racemase (388 aa).

The active-site Proton acceptor; specific for D-alanine is the Lys-44. Position 44 is an N6-(pyridoxal phosphate)lysine (Lys-44). Arg-142 is a binding site for substrate. The active-site Proton acceptor; specific for L-alanine is the Tyr-273. Met-321 contacts substrate.

The protein belongs to the alanine racemase family. The cofactor is pyridoxal 5'-phosphate.

It carries out the reaction L-alanine = D-alanine. It functions in the pathway amino-acid biosynthesis; D-alanine biosynthesis; D-alanine from L-alanine: step 1/1. Functionally, catalyzes the interconversion of L-alanine and D-alanine. May also act on other amino acids. In Mycobacterium ulcerans (strain Agy99), this protein is Alanine racemase (alr).